Here is a 99-residue protein sequence, read N- to C-terminus: uncharacterized protein (99 aa).

A helical membrane pass occupies residues 6–26 (LVCSIVFILFILFYDLKIGTI). Residues 48–95 (KTVKVKPGDTVMSIVGSAGSPDDIVKDFEALNPNVKANAIQAGTAYKF) form the LysM domain.

It is found in the secreted. The protein localises to the cell wall. The protein resides in the membrane. This is an uncharacterized protein from Bacillus subtilis (strain 168).